A 28-amino-acid chain; its full sequence is MRNLQPNMSRWAFFAKSVGTWNKSSCRS.

In Escherichia coli O6:H1 (strain CFT073 / ATCC 700928 / UPEC), this protein is Putative fruR/shl operon leader peptide (fruL).